We begin with the raw amino-acid sequence, 510 residues long: 2,3-bisphosphoglycerate-independent phosphoglycerate mutase (510 aa).

Aspartate 12 lines the Mn(2+) pocket. A Phosphotyrosine modification is found at tyrosine 36. Serine 62 contacts Mn(2+). Serine 62 functions as the Phosphoserine intermediate in the catalytic mechanism. Substrate contacts are provided by residues histidine 123, arginine 153–aspartate 154, arginine 185, arginine 191, arginine 261–arginine 264, and lysine 336. Residues aspartate 403, histidine 407, aspartate 444, histidine 445, and histidine 462 each coordinate Mn(2+).

This sequence belongs to the BPG-independent phosphoglycerate mutase family. Monomer. Mn(2+) serves as cofactor.

The catalysed reaction is (2R)-2-phosphoglycerate = (2R)-3-phosphoglycerate. Its pathway is carbohydrate degradation; glycolysis; pyruvate from D-glyceraldehyde 3-phosphate: step 3/5. Functionally, essential for rapid growth and for sporulation. Catalyzes the interconversion of 2-phosphoglycerate and 3-phosphoglycerate. The chain is 2,3-bisphosphoglycerate-independent phosphoglycerate mutase from Halalkalibacterium halodurans (strain ATCC BAA-125 / DSM 18197 / FERM 7344 / JCM 9153 / C-125) (Bacillus halodurans).